Reading from the N-terminus, the 1566-residue chain is MTADKDKDKDKEKDRDRDRDREREKRDKARESENSRPRRSCTLEGGAKNYAESDHSEDEDNDNNSATAEESTKKNKKKPPKKKSRYERTDTGEITSYITEDDVVYRPGDCVYIESRRPNTPYFICSIQDFKLVHNSQACCRSPTPALCDPPACSLPVASQPPQHLSEAGRGPVGSKRDHLLMNVKWYYRQSEVPDSVYQHLVQDRHNENDSGRELVITDPVIKNRELFISDYVDTYHAAALRGKCNISHFSDIFAAREFKARVDSFFYILGYNPETRRLNSTQGEIRVGPSHQAKLPDLQPFPSPDGDTVTQHEELVWMPGVNDCDLLMYLRAARSMAAFAGMCDGGSTEDGCVAASRDDTTLNALNTLHESGYDAGKALQRLVKKPVPKLIEKCWTEDEVKRFVKGLRQYGKNFFRIRKELLPNKETGELITFYYYWKKTPEAASSRAHRRHRRQAVFRRIKTRTASTPVNTPSRPPSSEFLDLSSASEDDFDSEDSEQELKGYACRHCFTTTSKDWHHGGRENILLCTDCRIHFKKYGELPPIEKPVDPPPFMFKPVKEEDDGLSGKHSMRTRRSRGSMSTLRSGRKKQPASPDGRTSPINEDIRSSGRNSPSAASTSSNDSKAETVKKSAKKVKEEASSPLKSNKRQREKVASDTEEADRTSSKKTKTQEISRPNSPSEGEGESSDSRSVNDEGSSDPKDIDQDNRSTSPSIPSPQDNESDSDSSAQQQMLQAQPPALQAPTGVTPAPSSAPPGTPQLPTPGPTPSATAVPPQGSPTASQAPNQPQAPTAPVPHTHIQQAPALHPQRPPSPHPPPHPSPHPPLQPLTGSAGQPSAPSHAQPPLHGQGPPGPHSLQAGPLLQHPGPPQPFGLPPQASQGQAPLGTSPAAAYPHTSLQLPASQSALQSQQPPREQPLPPAPLAMPHIKPPPTTPIPQLPAPQAHKHPPHLSGPSPFSMNANLPPPPALKPLSSLSTHHPPSAHPPPLQLMPQSQPLPSSPAQPPGLTQSQNLPPPPASHPPTGLHQVAPQPPFAQHPFVPGGPPPITPPTCPSTSTPPAGPGTSAQPPCSGAAASGGSIAGGSSCPLPTVQIKEEALDDAEEPESPPPPPRSPSPEPTVVDTPSHASQSARFYKHLDRGYNSCARTDLYFMPLAGSKLAKKREEAIEKAKREAEQKAREEREREKEKEKEREREREREREAERAAKASSSAHEGRLSDPQLSGPGHMRPSFEPPPTTIAAVPPYIGPDTPALRTLSEYARPHVMSPTNRNHPFYMPLNPTDPLLAYHMPGLYNVDPTIRERELREREIREREIRERELRERMKPGFEVKPPELDPLHPAANPMEHFARHSALTIPPTAGPHPFASFHPGLNPLERERLALAGPQLRPEMSYPDRLAAERIHAERMASLTSDPLARLQMFNVTPHHHQHSHIHSHLHLHQQDPLHQGSAGPVHPLVDPLTAGPHLARFPYPPGTLPNPLLGQPPHEHEMLRHPVFGTPYPRDLPGAIPPPMSAAHQLQAMHAQSAELQRLAMEQQWLHGHPHMHGGHLPSQEDYYSRLKKEGDKQL.

The span at 1–36 shows a compositional bias: basic and acidic residues; that stretch reads MTADKDKDKDKEKDRDRDRDREREKRDKARESENSR. The tract at residues 1–90 is disordered; sequence MTADKDKDKD…KKKSRYERTD (90 aa). Phosphoserine occurs at positions 53 and 56. A compositionally biased stretch (basic residues) spans 74-85; sequence KNKKKPPKKKSR. Residues 103-283 form the BAH domain; that stretch reads VVYRPGDCVY…PETRRLNSTQ (181 aa). T120 carries the post-translational modification Phosphothreonine. S142 and S304 each carry phosphoserine. Residues 284 to 387 form the ELM2 domain; that stretch reads GEIRVGPSHQ…KALQRLVKKP (104 aa). In terms of domain architecture, SANT spans 391–443; that stretch reads LIEKCWTEDEVKRFVKGLRQYGKNFFRIRKELLPNKETGELITFYYYWKKTPE. A disordered region spans residues 464–495; the sequence is TRTASTPVNTPSRPPSSEFLDLSSASEDDFDS. Over residues 465–474 the composition is skewed to polar residues; sequence RTASTPVNTP. The span at 479–488 shows a compositional bias: low complexity; it reads SSEFLDLSSA. The GATA-type zinc-finger motif lies at 507–532; that stretch reads CRHCFTTTSKDWHHGGRENILLCTDC. Residues 542–1133 form a disordered region; the sequence is LPPIEKPVDP…PSHASQSARF (592 aa). K560 is covalently cross-linked (Glycyl lysine isopeptide (Lys-Gly) (interchain with G-Cter in SUMO2)). Phosphoserine occurs at positions 594, 600, and 613. A compositionally biased stretch (low complexity) spans 609-623; the sequence is SGRNSPSAASTSSND. Basic and acidic residues predominate over residues 624–640; it reads SKAETVKKSAKKVKEEA. K637 participates in a covalent cross-link: Glycyl lysine isopeptide (Lys-Gly) (interchain with G-Cter in SUMO2). Phosphoserine occurs at positions 642, 656, 675, and 679. The segment covering 652–673 has biased composition (basic and acidic residues); the sequence is EKVASDTEEADRTSSKKTKTQE. A compositionally biased stretch (basic and acidic residues) spans 688 to 708; sequence SDSRSVNDEGSSDPKDIDQDN. Residues 709 to 720 show a composition bias toward polar residues; the sequence is RSTSPSIPSPQD. Positions 726-751 are enriched in low complexity; sequence DSSAQQQMLQAQPPALQAPTGVTPAP. Over residues 752–767 the composition is skewed to pro residues; the sequence is SSAPPGTPQLPTPGPT. Residues 778–796 show a composition bias toward low complexity; it reads SPTASQAPNQPQAPTAPVP. The segment covering 809–827 has biased composition (pro residues); it reads QRPPSPHPPPHPSPHPPLQ. Positions 829 to 840 are enriched in polar residues; that stretch reads LTGSAGQPSAPS. Low complexity-rich tracts occupy residues 843–865 and 897–913; these read QPPLHGQGPPGPHSLQAGPLLQH and SLQLPASQSALQSQQPP. Pro residues predominate over residues 914–940; it reads REQPLPPAPLAMPHIKPPPTTPIPQLP. Residues 970-980 are compositionally biased toward low complexity; that stretch reads KPLSSLSTHHP. The segment covering 1030 to 1052 has biased composition (pro residues); that stretch reads PQPPFAQHPFVPGGPPPITPPTC. Residues 1053–1085 show a composition bias toward low complexity; sequence PSTSTPPAGPGTSAQPPCSGAAASGGSIAGGSS. Phosphoserine is present on residues S1106, S1113, and S1115. Positions 1106–1117 are enriched in pro residues; it reads SPPPPPRSPSPE. Position 1119 is a phosphothreonine (T1119). The stretch at 1156-1211 forms a coiled coil; sequence GSKLAKKREEAIEKAKREAEQKAREEREREKEKEKEREREREREREAERAAKASSS. K1158 is subject to N6-acetyllysine. Residues 1162 to 1206 show a composition bias toward basic and acidic residues; it reads KREEAIEKAKREAEQKAREEREREKEKEKEREREREREREAERAA. Residues 1162-1246 are disordered; it reads KREEAIEKAK…TTIAAVPPYI (85 aa). Residue Y1259 is modified to Phosphotyrosine. S1266 carries the post-translational modification Phosphoserine.

Interacts with HDAC1. Interacts with ATN1. Interaction with ATN1 is improved when the poly-Gln region of ATN1 is extended. Interacts with FAT1. In terms of tissue distribution, widely expressed. Expressed in tumor cell lines.

The protein resides in the nucleus. In terms of biological role, plays a role as a transcriptional repressor during development. May play a role in the control of cell survival. Overexpression of RERE recruits BAX to the nucleus particularly to POD and triggers caspase-3 activation, leading to cell death. The polypeptide is Arginine-glutamic acid dipeptide repeats protein (RERE) (Homo sapiens (Human)).